The primary structure comprises 344 residues: L-sulfolactate dehydrogenase (344 aa).

Belongs to the LDH2/MDH2 oxidoreductase family.

It is found in the cytoplasm. It catalyses the reaction a (2S)-2-hydroxycarboxylate + NAD(+) = a 2-oxocarboxylate + NADH + H(+). The protein operates within cofactor biosynthesis; coenzyme M biosynthesis; sulfoacetaldehyde from phosphoenolpyruvate and sulfite: step 3/4. Its pathway is cofactor biosynthesis; 5,6,7,8-tetrahydromethanopterin biosynthesis. In terms of biological role, catalyzes the reduction of sulfopyruvate to (R)-sulfolactate much more efficiently than the reverse reaction. Also catalyzes the reduction of oxaloacetate, alpha-ketoglutarate, and to a much lower extent, KHTCA, but not pyruvate. Involved in the biosynthesis of both coenzyme M (with (R)-sulfolactate) and methanopterin (with alpha-ketoglutarate). The chain is L-sulfolactate dehydrogenase (comC) from Methanocaldococcus jannaschii (strain ATCC 43067 / DSM 2661 / JAL-1 / JCM 10045 / NBRC 100440) (Methanococcus jannaschii).